A 214-amino-acid polypeptide reads, in one-letter code: MFLQSQKLWTMLLILAIWSPISHSLHFDLHSGRTKCIAEDIKSNSMTVGKYNIDNPHEGQALPQTHKISVKVTSNSGNNYHHAEQVDSGQFAFSAVEAGDYMACFTAVDHKPEVSLSIDFEWKTGVQSKSWANVAKKSQVEVMEFEVKSLLDTVNSIHEEMYYLRDREEEMQDLNRSTNTKMAWLSVLSFFVCIGVAGMQFLHLKTFFEKKKVI.

A signal peptide spans 1 to 24 (MFLQSQKLWTMLLILAIWSPISHS). At 25–181 (LHFDLHSGRT…QDLNRSTNTK (157 aa)) the chain is on the lumenal side. Residues 34-149 (TKCIAEDIKS…VEVMEFEVKS (116 aa)) form the GOLD domain. Positions 164–177 (LRDREEEMQDLNRS) form a coiled coil. Arg167 is subject to Omega-N-methylated arginine. An N-linked (GlcNAc...) asparagine glycan is attached at Asn175. A helical transmembrane segment spans residues 182-202 (MAWLSVLSFFVCIGVAGMQFL). Topologically, residues 203–214 (HLKTFFEKKKVI) are cytoplasmic. The short motif at 207-208 (FF) is the COPII vesicle coat-binding element. The COPI vesicle coat-binding signature appears at 207–214 (FFEKKKVI).

Belongs to the EMP24/GP25L family. Probably oligomerizes with other members of the EMP24/GP25L family. Associates with the COPI vesicle coat (coatomer). Associates with the COPII vesicle coat (coatomer).

The protein resides in the endoplasmic reticulum membrane. Its subcellular location is the golgi apparatus. It is found in the cis-Golgi network membrane. It localises to the golgi stack membrane. Involved in vesicular protein trafficking. Mainly functions in the early secretory pathway. Thought to act as cargo receptor at the lumenal side for incorporation of secretory cargo molecules into transport vesicles and to be involved in vesicle coat formation at the cytoplasmic side. This chain is Transmembrane emp24 domain-containing protein p24delta10, found in Arabidopsis thaliana (Mouse-ear cress).